Reading from the N-terminus, the 247-residue chain is Synaptonemal complex central element protein 1-like (247 aa).

The stretch at 71 to 196 forms a coiled coil; that stretch reads SEELGEAQAL…LQEARETWDS (126 aa). A disordered region spans residues 189 to 247; sequence EARETWDSPGNCGLKTELEELEGQSQRSPEAQNDKGEASQEEQHHLETSEELPRTGTLC. Basic and acidic residues predominate over residues 220 to 241; sequence QNDKGEASQEEQHHLETSEELP.

Belongs to the SYCE family. As to expression, isoform 1 is abundantly expressed in testis and weakly in ovary, it is not found in other tissues. Isoform 2 is expressed in testis and poorly in brain, heart, lung and other examined tissues.

In terms of biological role, may be involved in meiosis. Isoform 1 may be involved in meiosis during spermatogenesis while isoform 2 is probably related to a later stage of meiosis, in the development stage of secondary spermatocytes and spermatids. In Mus musculus (Mouse), this protein is Synaptonemal complex central element protein 1-like (Syce1l).